A 561-amino-acid polypeptide reads, in one-letter code: Probable oligo-1,6-glucosidase 2 (561 aa).

The active-site Nucleophile is the Asp-199. Glu-255 (proton donor) is an active-site residue.

This sequence belongs to the glycosyl hydrolase 13 family.

Its subcellular location is the cytoplasm. The catalysed reaction is Hydrolysis of (1-&gt;6)-alpha-D-glucosidic linkages in some oligosaccharides produced from starch and glycogen by alpha-amylase, and in isomaltose.. In Bacillus subtilis (strain 168), this protein is Probable oligo-1,6-glucosidase 2 (ycdG).